The chain runs to 788 residues: Endonuclease MutS2 (788 aa).

332–339 (GPNTGGKT) lines the ATP pocket. Positions 713–788 (VDLRGMDAEE…GTGVTVVELK (76 aa)) constitute a Smr domain.

Belongs to the DNA mismatch repair MutS family. MutS2 subfamily. In terms of assembly, homodimer. Binds to stalled ribosomes, contacting rRNA.

Its function is as follows. Endonuclease that is involved in the suppression of homologous recombination and thus may have a key role in the control of bacterial genetic diversity. Functionally, acts as a ribosome collision sensor, splitting the ribosome into its 2 subunits. Detects stalled/collided 70S ribosomes which it binds and splits by an ATP-hydrolysis driven conformational change. Acts upstream of the ribosome quality control system (RQC), a ribosome-associated complex that mediates the extraction of incompletely synthesized nascent chains from stalled ribosomes and their subsequent degradation. Probably generates substrates for RQC. This Clostridium botulinum (strain Okra / Type B1) protein is Endonuclease MutS2.